The primary structure comprises 435 residues: MKGITLTAPKRLRGVIEVPGDKSISHRSVLFNAIATGSAHITHFLPGADCLSTVACIRALGVTVEQPAERELIVHGVGLGGLREPADVLDCGNSGTTLRLLAGLLAGHPFFSVLTGDASLRSRPQRRIVVPLRAMGAQIDGRDDGDRAPLAIRGNRLRGGHYELSIASAQVKSALLLAALNAEQPLTLTGRIDSRDHTERMLAAMGLEITVTADQITIQPPSEATAPTALSLRVPGDPSSAAFWWVAAAIHPDAELVTPGVCLNPTRIGAIEVLQAMGADLTVMNERLEGSEPVGDVVVRSSSLRGTTIAGTLIPRLIDEIPVLAVAAACASGETVIRDAQELRAKETDRIATVAAGLSAMGAVVEPTADGMVIVGQPGQLQGTTLNSFHDHRLAMAWAIAAMVARGETTILEPAAAAVSYPEFWQTLAMVQEAA.

Residues K22, S23, and R27 each coordinate 3-phosphoshikimate. Position 22 (K22) interacts with phosphoenolpyruvate. 2 residues coordinate phosphoenolpyruvate: G95 and R123. Residues S168, Q170, D319, and K346 each coordinate 3-phosphoshikimate. Position 170 (Q170) interacts with phosphoenolpyruvate. D319 functions as the Proton acceptor in the catalytic mechanism. Phosphoenolpyruvate contacts are provided by R350 and R393.

Belongs to the EPSP synthase family. In terms of assembly, monomer.

The protein resides in the cytoplasm. It catalyses the reaction 3-phosphoshikimate + phosphoenolpyruvate = 5-O-(1-carboxyvinyl)-3-phosphoshikimate + phosphate. It participates in metabolic intermediate biosynthesis; chorismate biosynthesis; chorismate from D-erythrose 4-phosphate and phosphoenolpyruvate: step 6/7. Functionally, catalyzes the transfer of the enolpyruvyl moiety of phosphoenolpyruvate (PEP) to the 5-hydroxyl of shikimate-3-phosphate (S3P) to produce enolpyruvyl shikimate-3-phosphate and inorganic phosphate. In Chloroflexus aurantiacus (strain ATCC 29364 / DSM 637 / Y-400-fl), this protein is 3-phosphoshikimate 1-carboxyvinyltransferase.